Here is a 140-residue protein sequence, read N- to C-terminus: ATP synthase epsilon chain (140 aa).

It belongs to the ATPase epsilon chain family. In terms of assembly, F-type ATPases have 2 components, CF(1) - the catalytic core - and CF(0) - the membrane proton channel. CF(1) has five subunits: alpha(3), beta(3), gamma(1), delta(1), epsilon(1). CF(0) has three main subunits: a, b and c.

It is found in the cell inner membrane. Its function is as follows. Produces ATP from ADP in the presence of a proton gradient across the membrane. The chain is ATP synthase epsilon chain from Pseudoalteromonas translucida (strain TAC 125).